We begin with the raw amino-acid sequence, 344 residues long: MADHWNKLTRPSSIKVVGGKEPCVMELVIEPLESGFALTLGNALRRVMMSSLRGFAVYGIEIEGASHELTALSGVREDVADLVLNLSMLRVKLLNSNQRVLRLVARGPGEVTAASIVDSADHVVLNKDLHICTLGKDVDFCMKIYVNSGKGYVPATEYRAASRSGGASEVGSGFIATNALYSPVKKVALKIESSRIGQFTDYDRLMLTVETDGSVAPDDAVAVAAKILQDQLQSFISFDEVEETRKSVDKEEGVLPYDHNLLRKVDELELSVRSHNCLKNDNITYIGDLVQRTESDMLRTPNFGRKSLNEINEVLASMNLHLGMKVPNWPPESIENLSKQYSED.

The alpha N-terminal domain (alpha-NTD) stretch occupies residues 1-239 (MADHWNKLTR…DQLQSFISFD (239 aa)). An alpha C-terminal domain (alpha-CTD) region spans residues 254 to 344 (VLPYDHNLLR…ENLSKQYSED (91 aa)).

The protein belongs to the RNA polymerase alpha chain family. As to quaternary structure, homodimer. The RNAP catalytic core consists of 2 alpha, 1 beta, 1 beta' and 1 omega subunit. When a sigma factor is associated with the core the holoenzyme is formed, which can initiate transcription.

It catalyses the reaction RNA(n) + a ribonucleoside 5'-triphosphate = RNA(n+1) + diphosphate. Its function is as follows. DNA-dependent RNA polymerase catalyzes the transcription of DNA into RNA using the four ribonucleoside triphosphates as substrates. The sequence is that of DNA-directed RNA polymerase subunit alpha from Anaplasma phagocytophilum (strain HZ).